A 450-amino-acid polypeptide reads, in one-letter code: Phosphoglucosamine mutase (450 aa).

Ser102 serves as the catalytic Phosphoserine intermediate. The Mg(2+) site is built by Ser102, Asp243, Asp245, and Asp247. Phosphoserine is present on Ser102.

This sequence belongs to the phosphohexose mutase family. Requires Mg(2+) as cofactor. Activated by phosphorylation.

It carries out the reaction alpha-D-glucosamine 1-phosphate = D-glucosamine 6-phosphate. In terms of biological role, catalyzes the conversion of glucosamine-6-phosphate to glucosamine-1-phosphate. The polypeptide is Phosphoglucosamine mutase (Rhizobium etli (strain ATCC 51251 / DSM 11541 / JCM 21823 / NBRC 15573 / CFN 42)).